Here is a 213-residue protein sequence, read N- to C-terminus: Kynurenine formamidase (213 aa).

Tryptophan 18 is a binding site for substrate. 3 residues coordinate Zn(2+): histidine 48, histidine 52, and aspartate 54. The Proton donor/acceptor role is filled by histidine 58. Zn(2+) contacts are provided by histidine 160 and glutamate 172.

The protein belongs to the Cyclase 1 superfamily. KynB family. As to quaternary structure, homodimer. Zn(2+) serves as cofactor.

The enzyme catalyses N-formyl-L-kynurenine + H2O = L-kynurenine + formate + H(+). The protein operates within amino-acid degradation; L-tryptophan degradation via kynurenine pathway; L-kynurenine from L-tryptophan: step 2/2. Functionally, catalyzes the hydrolysis of N-formyl-L-kynurenine to L-kynurenine, the second step in the kynurenine pathway of tryptophan degradation. This is Kynurenine formamidase from Burkholderia pseudomallei (strain 1710b).